We begin with the raw amino-acid sequence, 549 residues long: Frizzled-7-A (549 aa).

Positions 1-22 are cleaved as a signal peptide; the sequence is MSSTVSLLFCCLFLQLCPSAQQ. The Extracellular portion of the chain corresponds to 23–231; the sequence is YHGEKGISVP…EEEVRFARLW (209 aa). In terms of domain architecture, FZ spans 32 to 151; that stretch reads PDHGFCQPIS…HGAGEICVGQ (120 aa). Cystine bridges form between Cys-37–Cys-98, Cys-45–Cys-91, Cys-82–Cys-119, Cys-108–Cys-148, and Cys-112–Cys-136. N-linked (GlcNAc...) asparagine glycosylation occurs at Asn-51. N-linked (GlcNAc...) asparagine glycosylation is present at Asn-152. The helical transmembrane segment at 232–252 threads the bilayer; it reads VGIWAILCCISTLFTVLTYLV. Residues 253-263 are Cytoplasmic-facing; sequence DMRRFSYPERP. The helical transmembrane segment at 264–284 threads the bilayer; the sequence is IIFLSGCYFMVAVAYTAGFLL. Residues 285-311 lie on the Extracellular side of the membrane; sequence EERAVCVERFSEDSYRTVAQGTKKEGC. A helical membrane pass occupies residues 312–332; it reads TILFMILYFFGMASSIWWVIL. Residues 333 to 354 are Cytoplasmic-facing; that stretch reads SLTWFLSAGMKWGHEAIEANSQ. The chain crosses the membrane as a helical span at residues 355–375; that stretch reads YFHLAAWAVPAVKTITILAMG. Residues 376 to 398 lie on the Extracellular side of the membrane; sequence QVDGDVLSGVCYVGINSVDSLRG. Residues 399 to 419 traverse the membrane as a helical segment; the sequence is FVLAPLFVYLFIGTSFLLAGF. The Cytoplasmic portion of the chain corresponds to 420–445; it reads VSLFRIRTIMKHDGTKTEKLEKLMVR. Residues 446-466 traverse the membrane as a helical segment; the sequence is IGVFSVMYTVPATIVLACYFY. Over 467–503 the chain is Extracellular; it reads EQAFRDTWEKTWLVQTCKGYAVPCPNYNFAPMSPDFT. The chain crosses the membrane as a helical span at residues 504–524; sequence VFMIKYLMTMIVGITSSFWIW. The Cytoplasmic portion of the chain corresponds to 525 to 549; the sequence is SGKTLQSWRRFYHRLSNGSKGETAV. Residues 527–532 carry the Lys-Thr-X-X-X-Trp motif, mediates interaction with the PDZ domain of Dvl family members motif; it reads KTLQSW. Residues 547 to 549 carry the PDZ-binding motif; it reads TAV.

This sequence belongs to the G-protein coupled receptor Fz/Smo family. As to quaternary structure, interacts with wnt11 and sdc4. The extracellular domain interacts with the extracellular domain of pcdh8/papc. Expressed in the animal region of cleavage stage embryos. During gastrulation, broadly expressed on the dorsal side of the embryo in deep mesodermal cells surrounding the blastopore lip and in presumptive anterior neuroectoderm. During neurulation, becomes progressively more restricted to the dorsal epidermis, neural plate, and neural tube. Expressed in the cranial neural crest of neurulae and tailbud embryos as well as the pronephros of tailbud embryos. Localized to the brain of neurulae, tailbud embryos and tadpoles. In tadpoles, strongly expressed in the eye and developing heart.

It localises to the cell membrane. The protein localises to the endosome membrane. Receptor for Wnt proteins. Acts in both canonical and non-canonical Wnt pathways. Although different papers report differing Wnt preferences, wnt5a, wnt8b and wnt11 have been proposed as synergists. In the canonical Wnt pathway, acts via beta-catenin to promote the expression of the dorsal genes siamois, twin and nodal3 and to establish the dorsal axis of the embryo and induce dorsal mesoderm formation. In a non-canonical Wnt/planar cell polarity (PCP) pathway, acts with sdc4 and dvl2/dsh to regulate convergent extension cell movements during gastrulation. Triggers phosphorylation of dvl2/dsh and its translocation to the plasma membrane. In a third branch of Wnt signaling, acts in a non-canonical pathway via trimeric G proteins, and independently of dvl2/dsh, to recruit protein kinase C (PKC) to the membrane and thus activate PKC. PKC signaling controls cell sorting and tissue separation during gastrulation. This is Frizzled-7-A (fzd7-a) from Xenopus laevis (African clawed frog).